A 391-amino-acid chain; its full sequence is Ectodysplasin-A (391 aa).

A compositionally biased stretch (basic and acidic residues) spans 1-21; sequence MGYPEVERREPLPAAAPRERG. Residues 1–28 form a disordered region; it reads MGYPEVERREPLPAAAPRERGSQGCGCR. Residues 1–41 lie on the Cytoplasmic side of the membrane; that stretch reads MGYPEVERREPLPAAAPRERGSQGCGCRGAPARAGEGNSCR. A helical; Signal-anchor for type II membrane protein transmembrane segment spans residues 42–62; that stretch reads LFLGFFGLSLALHLLTLCCYL. The Extracellular segment spans residues 63–391; the sequence is ELRSELRRER…AIRLGEAPAS (329 aa). Disordered regions lie at residues 72 to 129 and 146 to 244; these read RGTE…DSQD and YSEE…TGTR. A compositionally biased stretch (low complexity) spans 86–96; the sequence is TSGTLSSPGSL. Residues 180 to 229 form the Collagen-like domain; that stretch reads GPPGPNGPPGPPGPPGPQGPPGIPGIPGIPGTTVMGPPGPPGPPGPQGPP. 2 stretches are compositionally biased toward pro residues: residues 181 to 203 and 216 to 228; these read PPGPNGPPGPPGPPGPQGPPGIP and PPGPPGPPGPQGP. The THD domain maps to 249 to 385; the sequence is AVVHLQGQGS…HTTFFGAIRL (137 aa). A glycan (N-linked (GlcNAc...) asparagine) is linked at Asn313. The cysteines at positions 332 and 346 are disulfide-linked. A glycan (N-linked (GlcNAc...) asparagine) is linked at Asn372.

Belongs to the tumor necrosis factor family. In terms of assembly, homotrimer. The homotrimers may then dimerize and form higher-order oligomers. In terms of processing, N-glycosylated. Post-translationally, processing by furin produces a secreted form.

It is found in the cell membrane. The protein localises to the secreted. In terms of biological role, cytokine which is involved in epithelial-mesenchymal signaling during morphogenesis of ectodermal organs. Functions as a ligand activating the DEATH-domain containing receptors EDAR and EDA2R. Isoform TAA binds only to the receptor EDAR, while isoform TA-A2 binds exclusively to the receptor EDA2R. May also play a role in cell adhesion. Functionally, isoform TAA binds only to the receptor EDAR, while isoform TA-A2 binds exclusively to the receptor EDA2R. Isoform TA-A2 binds exclusively to the receptor EDA2R. The polypeptide is Ectodysplasin-A (Eda) (Mus musculus (Mouse)).